A 362-amino-acid chain; its full sequence is Peptide chain release factor 1 (362 aa).

Residue glutamine 240 is modified to N5-methylglutamine.

It belongs to the prokaryotic/mitochondrial release factor family. In terms of processing, methylated by PrmC. Methylation increases the termination efficiency of RF1.

It localises to the cytoplasm. Peptide chain release factor 1 directs the termination of translation in response to the peptide chain termination codons UAG and UAA. This chain is Peptide chain release factor 1, found in Bifidobacterium longum subsp. infantis (strain ATCC 15697 / DSM 20088 / JCM 1222 / NCTC 11817 / S12).